A 354-amino-acid chain; its full sequence is Guanine nucleotide-binding protein G(i) subunit alpha (354 aa).

Gly-2 is lipidated: N-myristoyl glycine. The S-palmitoyl cysteine moiety is linked to residue Cys-3. Positions 32–354 constitute a G-alpha domain; it reads REVKLLLLGA…KNNLKDCGLF (323 aa). The G1 motif stretch occupies residues 35–48; sequence KLLLLGAGESGKST. GTP-binding positions include 40–47, 175–181, 200–204, 269–272, and Ala-326; these read GAGESGKS, LRTRVKT, DVGGQ, and NKKD. Residues Ser-47 and Thr-181 each contribute to the Mg(2+) site. The segment at 173–181 is G2 motif; sequence DVLRTRVKT. The tract at residues 196–205 is G3 motif; sequence FKMFDVGGQR. The segment at 265–272 is G4 motif; it reads ILFLNKKD. The segment at 324–329 is G5 motif; that stretch reads TCATDT.

The protein belongs to the G-alpha family. G(i/o/t/z) subfamily. In terms of assembly, g proteins are composed of 3 units; alpha, beta and gamma. The alpha chain contains the guanine nucleotide binding site.

In terms of biological role, guanine nucleotide-binding proteins (G proteins) are involved as modulators or transducers in various transmembrane signaling systems. This G protein is involved in 1-methyladenine-induced oocyte maturation. This chain is Guanine nucleotide-binding protein G(i) subunit alpha, found in Patiria pectinifera (Starfish).